The chain runs to 459 residues: Bifunctional protein GlmU (459 aa).

Positions 1 to 229 are pyrophosphorylase; that stretch reads MSNFAIXLAA…FDESLGVNDR (229 aa). Residues 8–11, Lys22, Gln72, and 77–78 contribute to the UDP-N-acetyl-alpha-D-glucosamine site; these read LAAG and GT. Asp102 provides a ligand contact to Mg(2+). Residues Gly139, Glu154, Asn169, and Asn227 each contribute to the UDP-N-acetyl-alpha-D-glucosamine site. Asn227 contacts Mg(2+). A linker region spans residues 230–250; it reads VALATAESVMRRRINHKHMVN. An N-acetyltransferase region spans residues 251-459; that stretch reads GVSFVNPEAT…TRLPHHPKNQ (209 aa). 2 residues coordinate UDP-N-acetyl-alpha-D-glucosamine: Arg332 and Lys350. Residue His362 is the Proton acceptor of the active site. Tyr365 and Asn376 together coordinate UDP-N-acetyl-alpha-D-glucosamine. Residues Ala379, 385-386, Ser404, Ala422, and Arg439 contribute to the acetyl-CoA site; that span reads NY.

The protein in the N-terminal section; belongs to the N-acetylglucosamine-1-phosphate uridyltransferase family. This sequence in the C-terminal section; belongs to the transferase hexapeptide repeat family. Homotrimer. The cofactor is Mg(2+).

It is found in the cytoplasm. It carries out the reaction alpha-D-glucosamine 1-phosphate + acetyl-CoA = N-acetyl-alpha-D-glucosamine 1-phosphate + CoA + H(+). The enzyme catalyses N-acetyl-alpha-D-glucosamine 1-phosphate + UTP + H(+) = UDP-N-acetyl-alpha-D-glucosamine + diphosphate. It participates in nucleotide-sugar biosynthesis; UDP-N-acetyl-alpha-D-glucosamine biosynthesis; N-acetyl-alpha-D-glucosamine 1-phosphate from alpha-D-glucosamine 6-phosphate (route II): step 2/2. The protein operates within nucleotide-sugar biosynthesis; UDP-N-acetyl-alpha-D-glucosamine biosynthesis; UDP-N-acetyl-alpha-D-glucosamine from N-acetyl-alpha-D-glucosamine 1-phosphate: step 1/1. Its pathway is bacterial outer membrane biogenesis; LPS lipid A biosynthesis. Functionally, catalyzes the last two sequential reactions in the de novo biosynthetic pathway for UDP-N-acetylglucosamine (UDP-GlcNAc). The C-terminal domain catalyzes the transfer of acetyl group from acetyl coenzyme A to glucosamine-1-phosphate (GlcN-1-P) to produce N-acetylglucosamine-1-phosphate (GlcNAc-1-P), which is converted into UDP-GlcNAc by the transfer of uridine 5-monophosphate (from uridine 5-triphosphate), a reaction catalyzed by the N-terminal domain. The sequence is that of Bifunctional protein GlmU from Streptococcus pneumoniae serotype 19F (strain G54).